The primary structure comprises 859 residues: Envelope glycoprotein (859 aa).

Positions 1–6 (MVSIAF) are excised as a propeptide. Residues 7 to 614 (YGGIPGGIST…KDLWSHIGNW (608 aa)) lie on the Extracellular side of the membrane. N-linked (GlcNAc...) asparagine; by host glycans are attached at residues asparagine 40, asparagine 112, asparagine 141, asparagine 148, asparagine 186, asparagine 214, asparagine 233, asparagine 244, asparagine 340, asparagine 368, asparagine 399, asparagine 406, asparagine 411, and asparagine 422. The tract at residues 446-466 (FGISAIVAAIVAATAIARSAT) is fusion peptide. 2 N-linked (GlcNAc...) asparagine; by host glycosylation sites follow: asparagine 483 and asparagine 490. Residues 498-513 (LIERQIKILYAMILQT) form an immunosuppression region. Residues asparagine 550 and asparagine 557 are each glycosylated (N-linked (GlcNAc...) asparagine; by host). 2 coiled-coil regions span residues 576–624 (ILTT…SIIK) and 663–699 (KKFH…YYKQ). The helical transmembrane segment at 615-635 (IPGLGASIIKYIVMFLLIYLL) threads the bilayer. At 636–859 (LTSSPKILRA…TSHVSMPQYV (224 aa)) the chain is on the cytoplasmic side.

The mature envelope protein (Env) consists of a trimer of SU-TM heterodimers attached by noncovalent interactions or by a labile interchain disulfide bond. Post-translationally, specific enzymatic cleavages in vivo yield mature proteins. Envelope glycoproteins are synthesized as an inactive precursor that is N-glycosylated and processed likely by host cell furin or by a furin-like protease in the Golgi to yield the mature SU and TM proteins. The cleavage site between SU and TM requires the minimal sequence [KR]-X-[KR]-R.

It localises to the virion membrane. The protein resides in the host cell membrane. The surface protein (SU) attaches the virus to the host cell by binding to its receptor. This interaction triggers the refolding of the transmembrane protein (TM) and is thought to activate its fusogenic potential by unmasking its fusion peptide. Fusion occurs at the host cell plasma membrane. In terms of biological role, the transmembrane protein (TM) acts as a class I viral fusion protein. Under the current model, the protein has at least 3 conformational states: pre-fusion native state, pre-hairpin intermediate state, and post-fusion hairpin state. During viral and target cell membrane fusion, the coiled coil regions (heptad repeats) assume a trimer-of-hairpins structure, positioning the fusion peptide in close proximity to the C-terminal region of the ectodomain. The formation of this structure appears to drive apposition and subsequent fusion of viral and target cell membranes. Membranes fusion leads to delivery of the nucleocapsid into the cytoplasm. This is Envelope glycoprotein (env) from Equus asinus (Donkey).